Here is a 273-residue protein sequence, read N- to C-terminus: MALKVYNSVTQSLRQVVQVDKSELWKGRPLKKLAKGITKTGGRNNLGRITIWHRGKGHKQLYRMIDFKRRVFDIYATVERIEYDPNRTAFIALIKYDDGKFSYILSPRNLNVGDKIISSDKAEINVGNCLPLEVIPVGTIIHNIEIKPGKGGQVARSAGTYAVLLNKDSGYAQIKFRSGEVRRISLASRATVGSVSNIDHKNISYGKAGRVRWLGRRPVVRGVAMNPVDHPHGGGEGKTSGGRHPVTPWGKKTKGKKTRKNKFTSRFIVKRRN.

The segment at 224–260 (AMNPVDHPHGGGEGKTSGGRHPVTPWGKKTKGKKTRK) is disordered. Basic residues predominate over residues 251–260 (KKTKGKKTRK).

The protein belongs to the universal ribosomal protein uL2 family. Part of the 50S ribosomal subunit. Forms a bridge to the 30S subunit in the 70S ribosome.

In terms of biological role, one of the primary rRNA binding proteins. Required for association of the 30S and 50S subunits to form the 70S ribosome, for tRNA binding and peptide bond formation. It has been suggested to have peptidyltransferase activity; this is somewhat controversial. Makes several contacts with the 16S rRNA in the 70S ribosome. The polypeptide is Large ribosomal subunit protein uL2 (Orientia tsutsugamushi (strain Ikeda) (Rickettsia tsutsugamushi)).